The chain runs to 719 residues: Pesticidal crystal protein Cry1Ib (719 aa).

It belongs to the delta endotoxin family.

Functionally, promotes colloidosmotic lysis by binding to the midgut epithelial cells of certain coleopteran and lepidopteran species. Active on Plutella xylostella but not on Bombyx mori. In Bacillus thuringiensis subsp. entomocidus, this protein is Pesticidal crystal protein Cry1Ib (cry1Ib).